We begin with the raw amino-acid sequence, 510 residues long: Glycogen synthase (510 aa).

Lys-18 is an ADP-alpha-D-glucose binding site.

It belongs to the glycosyltransferase 1 family. Bacterial/plant glycogen synthase subfamily.

The catalysed reaction is [(1-&gt;4)-alpha-D-glucosyl](n) + ADP-alpha-D-glucose = [(1-&gt;4)-alpha-D-glucosyl](n+1) + ADP + H(+). It participates in glycan biosynthesis; glycogen biosynthesis. Its function is as follows. Synthesizes alpha-1,4-glucan chains using ADP-glucose. The protein is Glycogen synthase of Bordetella bronchiseptica (strain ATCC BAA-588 / NCTC 13252 / RB50) (Alcaligenes bronchisepticus).